The following is a 146-amino-acid chain: Hemoglobin subunit beta-1 (146 aa).

The region spanning 2–146 (KWTDKERAVI…VVSALGKQYC (145 aa)) is the Globin domain. Positions 63 and 92 each coordinate heme b.

This sequence belongs to the globin family. As to quaternary structure, heterotetramer of two alpha chains and two beta chains. As to expression, red blood cells.

Functionally, involved in oxygen transport from gills to the various peripheral tissues. The chain is Hemoglobin subunit beta-1 from Lycodes reticulatus (Arctic eelpout).